The primary structure comprises 969 residues: Vacuolar membrane protease (969 aa).

Over 1–12 (MTRVNSIIGFRP) the chain is Cytoplasmic. The helical transmembrane segment at 13–33 (IPVTLLTVITYVSLFSALLFI) threads the bilayer. Residues 34–381 (DRQPPAVAKK…RAFSVLHLHT (348 aa)) lie on the Vacuolar side of the membrane. The N-linked (GlcNAc...) asparagine glycan is linked to asparagine 125. Histidine 166 and aspartate 178 together coordinate Zn(2+). Glutamate 216 acts as the Proton acceptor in catalysis. Zn(2+) is bound by residues glutamate 217, glutamate 242, and histidine 315. Asparagine 355 carries an N-linked (GlcNAc...) asparagine glycan. The helical transmembrane segment at 382 to 402 (IFAFTITLIVVPFVVVLVAMW) threads the bilayer. Topologically, residues 403-438 (ALGHFDKLYFFSNTAYIPPPPEHSIASRTTQGWRGV) are cytoplasmic. A helical transmembrane segment spans residues 439–459 (LRFPVAFVAASAGVVGMAFLI). The Vacuolar segment spans residues 460 to 469 (NKINPMVVYA). The chain crosses the membrane as a helical span at residues 470 to 490 (SQYTVWTCFLSTWWIIAWVIL). The Cytoplasmic segment spans residues 491–505 (RGADAVRPTALARGY). The helical transmembrane segment at 506-526 (GFLEQWLLWLVAMIGVAISIG) threads the bilayer. The Vacuolar segment spans residues 527-531 (KSHLG). A helical transmembrane segment spans residues 532 to 552 (SGYWVLVFYSGFFTSAFISLL). Over 553–662 (EMAALQKKSE…WSKDLPSWTW (110 aa)) the chain is Cytoplasmic. The segment at 571 to 629 (DQAYPPEEHSQTGASGNISNRAANDDDDAGEHATEETPLFRGPNRPLSFAPHRNPRYDN) is disordered. The segment covering 581-592 (QTGASGNISNRA) has biased composition (polar residues). A helical transmembrane segment spans residues 663–683 (ILQFLATVPLQLVLAGSVALL). The Vacuolar segment spans residues 684–698 (LGNALAQTGADGSDM). Residues 699–719 (LTVLLGFGVFSIILLLPVAPF) traverse the membrane as a helical segment. At 720-727 (LHRITYHV) the chain is on the cytoplasmic side. A helical membrane pass occupies residues 728 to 748 (TLFIFVIFVGTFIYNLAAPPF). Residues 749-969 (SPNARLKVYF…LVEGSVPFMI (221 aa)) lie on the Vacuolar side of the membrane. Asparagine 840 carries an N-linked (GlcNAc...) asparagine glycan.

It belongs to the peptidase M28 family. Requires Zn(2+) as cofactor.

It is found in the vacuole membrane. In terms of biological role, may be involved in vacuolar sorting and osmoregulation. This is Vacuolar membrane protease from Tuber melanosporum (strain Mel28) (Perigord black truffle).